The following is a 191-amino-acid chain: Calcium-activated potassium channel subunit beta-1 (191 aa).

At Met-1–Cys-18 the chain is on the cytoplasmic side. The helical transmembrane segment at Leu-19–Leu-39 threads the bilayer. Residues Pro-40–Gln-155 are Extracellular-facing. Asn-80 and Asn-142 each carry an N-linked (GlcNAc...) asparagine glycan. The helical transmembrane segment at Ile-156 to Ala-176 threads the bilayer. Topologically, residues Met-177–Lys-191 are cytoplasmic.

This sequence belongs to the KCNMB (TC 8.A.14.1) family. KCNMB1 subfamily. Interacts with KCNMA1 tetramer. There are probably 4 molecules of KCMNB1 per KCNMA1 tetramer. N-glycosylated. In terms of tissue distribution, weakly expressed. In brain, it is expressed in a few discrete populations of neurons that also express KCNMA1.

It is found in the membrane. Functionally, regulatory subunit of the calcium activated potassium KCNMA1 (maxiK) channel. Modulates the calcium sensitivity and gating kinetics of KCNMA1, thereby contributing to KCNMA1 channel diversity. Increases the apparent Ca(2+)/voltage sensitivity of the KCNMA1 channel. It also modifies KCNMA1 channel kinetics and alters its pharmacological properties. It slows down the activation and the deactivation kinetics of the channel. Acts as a negative regulator of smooth muscle contraction by enhancing the calcium sensitivity to KCNMA1. Its presence is also a requirement for internal binding of the KCNMA1 channel opener dehydrosoyasaponin I (DHS-1) triterpene glycoside and for external binding of the agonist hormone 17-beta-estradiol (E2). Increases the binding activity of charybdotoxin (CTX) toxin to KCNMA1 peptide blocker by increasing the CTX association rate and decreasing the dissociation rate. This Rattus norvegicus (Rat) protein is Calcium-activated potassium channel subunit beta-1 (Kcnmb1).